The chain runs to 160 residues: Cyclic pyranopterin monophosphate synthase (160 aa).

Substrate-binding positions include 74-76 and 112-113; these read LSH and ME. The active site involves D127.

It belongs to the MoaC family. Homohexamer; trimer of dimers.

It carries out the reaction (8S)-3',8-cyclo-7,8-dihydroguanosine 5'-triphosphate = cyclic pyranopterin phosphate + diphosphate. It participates in cofactor biosynthesis; molybdopterin biosynthesis. Catalyzes the conversion of (8S)-3',8-cyclo-7,8-dihydroguanosine 5'-triphosphate to cyclic pyranopterin monophosphate (cPMP). This chain is Cyclic pyranopterin monophosphate synthase, found in Geobacter metallireducens (strain ATCC 53774 / DSM 7210 / GS-15).